We begin with the raw amino-acid sequence, 84 residues long: Small ribosomal subunit protein bS16 (84 aa).

This sequence belongs to the bacterial ribosomal protein bS16 family.

This chain is Small ribosomal subunit protein bS16, found in Desulforapulum autotrophicum (strain ATCC 43914 / DSM 3382 / VKM B-1955 / HRM2) (Desulfobacterium autotrophicum).